Here is a 240-residue protein sequence, read N- to C-terminus: MSSMSMSSSSAPAFPPDHFSSTDQLCYVHCSFCDTVLAVSVPPSSLFKTVTVRCGHCSNLLSVTVSMRALLLPSVSNLGHSFLPPPPPPPPPNLLEEMRSGGQNINMNMMMSHHASAHHPNEHLVMATRNGRSVDHLQEMPRPPPANRPPEKRQRVPSAYNRFIKEEIQRIKAGNPDISHREAFSAAAKNWAHFPHIHFGLMADHPPTKKANVRQQEGEDGMMGREGFYGSAANVGVAHN.

The segment at 30-57 (CSFCDTVLAVSVPPSSLFKTVTVRCGHC) adopts a C4-type zinc-finger fold. A disordered region spans residues 135-156 (DHLQEMPRPPPANRPPEKRQRV).

This sequence belongs to the YABBY family. Interacts with SPL/NZZ. Interacts with SPEAR2. Binds to LUG and LUH; these complexes promote adaxial cell identity in leaves as well as embryonic shoot apical meristem (SAM) initiation and postembryonic SAM maintenance. In terms of tissue distribution, expressed in abaxial regions of lateral aerial organ primordia leading to cotyledons, leaves, flower meristems, sepals, petals, stamen and carpels, but not in roots.

It is found in the nucleus. Its function is as follows. Involved in the abaxial cell fate determination during embryogenesis and organogenesis. Regulates the initiation of embryonic shoot apical meristem (SAM) development. Contributes to the repression of KNOX genes (STM, KNAT1/BP and KNAT2) to avoid ectopic meristems. Binds DNA without sequence specificity. This Arabidopsis thaliana (Mouse-ear cress) protein is Axial regulator YABBY 3 (YAB3).